A 357-amino-acid chain; its full sequence is Trans-acting factor B (357 aa).

The disordered stretch occupies residues 226–257 (DDNDLEEEERNASGEQTTTAREESEALDTTSN).

In terms of biological role, plasmid partition require REP1, REP2, and a cis-acting DNA sequence (known as STB). REP1 may act by intercalating in the yeast nuclear matrix and binding STB either directly or via REP2. The polypeptide is Trans-acting factor B (B) (Zygosaccharomyces bailii).